Here is an 877-residue protein sequence, read N- to C-terminus: TSET complex member tstB (877 aa).

2 disordered regions span residues histidine 398–serine 437 and threonine 522–isoleucine 557. 2 stretches are compositionally biased toward low complexity: residues glycine 412–serine 437 and serine 529–serine 556.

As to quaternary structure, component of the TSET complex, a heterohexamer composed of tstA, tstB, tstC, tstD, tstE and tstF, which may act in plasma membrane turnover. tstA, tstB, tstC and tstD are likely to be the core complex members with tstE and tstF acting as associated scaffold proteins.

This chain is TSET complex member tstB, found in Dictyostelium discoideum (Social amoeba).